The following is a 506-amino-acid chain: Kynurenine 3-monooxygenase (506 aa).

Residues 153–175 are disordered; the sequence is QETSLLPGEESEKDKKQNTEDED. Residues 162 to 171 are compositionally biased toward basic and acidic residues; the sequence is ESEKDKKQNT.

The protein belongs to the aromatic-ring hydroxylase family. KMO subfamily. FAD is required as a cofactor.

It is found in the mitochondrion outer membrane. It carries out the reaction L-kynurenine + NADPH + O2 + H(+) = 3-hydroxy-L-kynurenine + NADP(+) + H2O. It functions in the pathway cofactor biosynthesis; NAD(+) biosynthesis; quinolinate from L-kynurenine: step 1/3. Its function is as follows. Catalyzes the hydroxylation of L-kynurenine (L-Kyn) to form 3-hydroxy-L-kynurenine (L-3OHKyn). Required for synthesis of quinolinic acid. The sequence is that of Kynurenine 3-monooxygenase from Cryptococcus neoformans var. neoformans serotype D (strain B-3501A) (Filobasidiella neoformans).